A 119-amino-acid polypeptide reads, in one-letter code: Large ribosomal subunit protein bL20 (119 aa).

This sequence belongs to the bacterial ribosomal protein bL20 family.

Binds directly to 23S ribosomal RNA and is necessary for the in vitro assembly process of the 50S ribosomal subunit. It is not involved in the protein synthesizing functions of that subunit. The sequence is that of Large ribosomal subunit protein bL20 from Anoxybacillus flavithermus (strain DSM 21510 / WK1).